The chain runs to 332 residues: UDP-N-acetylenolpyruvoylglucosamine reductase (332 aa).

An FAD-binding PCMH-type domain is found at 55–221 (VGGAADLYVA…TQATLQLAPG (167 aa)). R200 is a catalytic residue. The active-site Proton donor is the S251. Residue E321 is part of the active site.

It belongs to the MurB family. FAD is required as a cofactor.

It is found in the cytoplasm. It catalyses the reaction UDP-N-acetyl-alpha-D-muramate + NADP(+) = UDP-N-acetyl-3-O-(1-carboxyvinyl)-alpha-D-glucosamine + NADPH + H(+). It participates in cell wall biogenesis; peptidoglycan biosynthesis. Functionally, cell wall formation. The sequence is that of UDP-N-acetylenolpyruvoylglucosamine reductase from Nostoc punctiforme (strain ATCC 29133 / PCC 73102).